A 343-amino-acid polypeptide reads, in one-letter code: Methionine synthase (343 aa).

Residues H211, C213, E236, and C315 each contribute to the Zn(2+) site.

Belongs to the archaeal MetE family. Zn(2+) serves as cofactor.

Its pathway is amino-acid biosynthesis; L-methionine biosynthesis via de novo pathway. Catalyzes the transfer of a methyl group to L-homocysteine resulting in methionine formation. The physiological methyl donor is unknown. The polypeptide is Methionine synthase (Thermoplasma acidophilum (strain ATCC 25905 / DSM 1728 / JCM 9062 / NBRC 15155 / AMRC-C165)).